The chain runs to 338 residues: Lipoate-protein ligase A (338 aa).

One can recognise a BPL/LPL catalytic domain in the interval 29-216; sequence PATQRVLFLW…AFFAHYGEHV (188 aa). Residues Arg71, 76-79, and Lys134 contribute to the ATP site; that span reads GAVF. Residue Lys134 participates in (R)-lipoate binding.

This sequence belongs to the LplA family. In terms of assembly, monomer.

Its subcellular location is the cytoplasm. It catalyses the reaction L-lysyl-[lipoyl-carrier protein] + (R)-lipoate + ATP = N(6)-[(R)-lipoyl]-L-lysyl-[lipoyl-carrier protein] + AMP + diphosphate + H(+). Its pathway is protein modification; protein lipoylation via exogenous pathway; protein N(6)-(lipoyl)lysine from lipoate: step 1/2. It participates in protein modification; protein lipoylation via exogenous pathway; protein N(6)-(lipoyl)lysine from lipoate: step 2/2. Catalyzes both the ATP-dependent activation of exogenously supplied lipoate to lipoyl-AMP and the transfer of the activated lipoyl onto the lipoyl domains of lipoate-dependent enzymes. The chain is Lipoate-protein ligase A from Escherichia coli O17:K52:H18 (strain UMN026 / ExPEC).